The chain runs to 57 residues: Large ribosomal subunit protein bL32c (57 aa).

Residues 1-21 (MAVPKKRTSKSKKNLRKNTWK) form a disordered region.

Belongs to the bacterial ribosomal protein bL32 family.

It is found in the plastid. The protein localises to the chloroplast. In Stigeoclonium helveticum (Green alga), this protein is Large ribosomal subunit protein bL32c.